The primary structure comprises 501 residues: Carboxypeptidase 1 (501 aa).

The Peptidase M32 domain maps to 3–496 (IHTYEKEFFD…LIDYLSNKYS (494 aa)). An HPF motif is present at residues 234–236 (HPF). A DXRXT motif is present at residues 244–248 (DVRVT). A Zn(2+)-binding site is contributed by His265. The HEXXH signature appears at 265–269 (HECGH). The active-site Proton donor/acceptor is the Glu266. Zn(2+)-binding residues include His269 and Glu295. Residues 294–297 (HESQ) carry the HES/GQ motif. The I/NRXXA/SD signature appears at 347–352 (IRVEAD). A GXXQDXHW motif is present at residues 402-409 (GILQDVHW).

Belongs to the peptidase M32 family. As to quaternary structure, homodimer. Zn(2+) is required as a cofactor.

The enzyme catalyses Release of a C-terminal amino acid with broad specificity, except for -Pro.. Broad specificity carboxypetidase that releases amino acids sequentially from the C-terminus, including neutral, aromatic, polar and basic residues. Has lower activity with substrates ending with His or Trp. This chain is Carboxypeptidase 1 (ypwA), found in Bacillus subtilis (strain 168).